The following is a 1833-amino-acid chain: MIFQSFLLGNLVSLCMKIINSVVVVGLYYGFLTTFSIGPSYLFLLRAQVMEEGEEGTEKKVSGTTGFIMGQLMMFISIYYTPLHLALGRPHTITVLALPYLLFHFFWNNHKHFFDYGSTSRNSMRNLSIQCVFLNNLIFQLFNYFILPSSMLARLVNIYMFRCNNKMLFVTSSFVGWLIGHILFMKWVGLVLVWIQQNNSIRSNKYLVSELRNSMARIFSILFFITCVYYLGRMPSPIFTNKLKQMLETNEIEEETNLEIEKTSETKETKQEEEGFTEEDPSPSLFSEEKEDPDKIDETEKIRVNGKDKTKDEFHLKEACYKNSPTSYSGNQDISKLEILKKEKKILFWFQKPLIFLLFDYKRWNRPMRYIKNNRFENAVRNEMSQYFFYTCQNDGKQRISFTYPPSLSIFWEMIQRKISLATTEKFLYDDELYNYWIYTNEQKKNSLSNEFANRITVLDKGLFYIDVLDKKTRLCKSKNEYLQKDHDPLLNGSYRGIIKKTLLPFINNDETTVKKLIDEIFINKIHSVLGNCNNYQEFEYKKDPFKKNPISSKIRHFVTLMSQFDGESTFNQKGISLLSEHKQICSEDPEIFFKFLVDTIIADSFTQTIPKESIGIKEISKKVPHWSYQLIDESEQEEMENEKQVSWPHQIRSRSGKEVVFFTDKQENTDNPTPNTADISEQADEVVLTRYPQESDFRRDIIKGSMRSQRRKIVIWELFQANIHSPLFLDRTNKSSFFSITFSRLIKRIFKNYMGKNPELDISNYKEEELKKKEKAKEHKKDKEKKQEQIRLDIAETWDTIPGAQIIRSLILLTQSILRKYILLPLLITGKNIGRILLFQLPEWSDDFKEWTSEMHIKCTYNGVQLSEKEFPKNWLTDGMQIKILSPFCLKPWHKSMIRPYHQDKKKKEQNQIDAFCFLTVVGLETDIPFGPPRKRPSFFQPIFKQLDKKIEKLIKGNFQVRKRLKEKILFFLKLQNETNNWIIEIFPFFKKIIRKMSTVNTIGVFGLKEASSEIKSEKDSRIKNHMIHESSVQIRFLNQTNSSVTEKKMKDLANRTRIIKNKIEKISNDKLKMSPKKTRYGTKNLGQILKRRNARLIRNSNYILKFFRERIYGDIFLYIINIPKINTQLFLESTKNGIDKSIYNNESITKTNKNRIQFISTINKKFLPFLSTSKNNSKIISDFSFLSQAYVFYKLSQAKILNLYKLRLVLQYRGISLFLKNEIKDFFGTQGITNSELKTKKLPNSGMNQWKNWLKLKNNYQYNLSQLKWSRLVPQKWRNRVTEHCEVENTNLYQNEELINSKKHLLLLPDQKYNFQKNYRYDVLSYKFFNYKNKNDSYRYSYGLPFQVNKNQEFSYTYNYNINNNKFIDMWWNIPISNFSYLEKTKIMDIDKNIDRKYLDFKILDFSLRNKIDIEDWIDISTSINENTKTEPRNYQIVEKINKKSLVYSTIYQEIKQSDQKNKLFDWMGMNEKILSRPISNLEFWFFSEFFSFYNAYKMKPWVIPINLLFSNSNVSEKFSKNKSINRKKKTNPFIPSNEKKSFELENRNQDEKELVSKEDLGSYVQENYEKDIEEDYISFIDIKKPIKQKQPKSVIEAEFDLFLKRYLLFQLKWADSLNEKLMDNIQVYCLVLRLINPIEILISSIERKELSMDIMLDRKDFNCPNWKQKRVLIIEPIRLSIRGDGQFLLYQTIGISLVHKSKHQNNQKRYSENVDKKFLGERNKNNFDLLAPENLLSPRRRRELRILLCLNSRNNNGVNTNPMENRVKNCNQFFDEKKDLDRDKNTLRNLKFFLWPNYRLEDLACMNRFWFDTNNGSRFSILRIHMYPQF.

6 helical membrane-spanning segments follow: residues 18–38 (IINSVVVVGLYYGFLTTFSIG), 67–87 (FIMGQLMMFISIYYTPLHLAL), 90–110 (PHTITVLALPYLLFHFFWNNH), 127–147 (LSIQCVFLNNLIFQLFNYFIL), 175–195 (VGWLIGHILFMKWVGLVLVWI), and 218–238 (IFSILFFITCVYYLGRMPSPI). Residues 254–301 (EETNLEIEKTSETKETKQEEEGFTEEDPSPSLFSEEKEDPDKIDETEK) are disordered. 2 stretches are compositionally biased toward basic and acidic residues: residues 259–273 (EIEKTSETKETKQEE) and 292–301 (DPDKIDETEK).

The protein belongs to the TIC214 family. As to quaternary structure, part of the Tic complex.

It localises to the plastid. The protein resides in the chloroplast inner membrane. In terms of biological role, involved in protein precursor import into chloroplasts. May be part of an intermediate translocation complex acting as a protein-conducting channel at the inner envelope. The sequence is that of Protein TIC 214 from Spinacia oleracea (Spinach).